The following is a 295-amino-acid chain: Lipoyl synthase (295 aa).

7 residues coordinate [4Fe-4S] cluster: Cys34, Cys39, Cys45, Cys60, Cys64, Cys67, and Ser273. The 217-residue stretch at 46 to 262 (WNKRHATIMI…KLMAYAKGFS (217 aa)) folds into the Radical SAM core domain.

This sequence belongs to the radical SAM superfamily. Lipoyl synthase family. [4Fe-4S] cluster is required as a cofactor.

It localises to the cytoplasm. The enzyme catalyses [[Fe-S] cluster scaffold protein carrying a second [4Fe-4S](2+) cluster] + N(6)-octanoyl-L-lysyl-[protein] + 2 oxidized [2Fe-2S]-[ferredoxin] + 2 S-adenosyl-L-methionine + 4 H(+) = [[Fe-S] cluster scaffold protein] + N(6)-[(R)-dihydrolipoyl]-L-lysyl-[protein] + 4 Fe(3+) + 2 hydrogen sulfide + 2 5'-deoxyadenosine + 2 L-methionine + 2 reduced [2Fe-2S]-[ferredoxin]. The protein operates within protein modification; protein lipoylation via endogenous pathway; protein N(6)-(lipoyl)lysine from octanoyl-[acyl-carrier-protein]: step 2/2. Its function is as follows. Catalyzes the radical-mediated insertion of two sulfur atoms into the C-6 and C-8 positions of the octanoyl moiety bound to the lipoyl domains of lipoate-dependent enzymes, thereby converting the octanoylated domains into lipoylated derivatives. The chain is Lipoyl synthase from Anaplasma marginale (strain St. Maries).